Here is a 253-residue protein sequence, read N- to C-terminus: 5'/3'-nucleotidase SurE (253 aa).

Residues D8, D9, S39, and N92 each contribute to the a divalent metal cation site.

It belongs to the SurE nucleotidase family. Requires a divalent metal cation as cofactor.

The protein resides in the cytoplasm. It catalyses the reaction a ribonucleoside 5'-phosphate + H2O = a ribonucleoside + phosphate. The catalysed reaction is a ribonucleoside 3'-phosphate + H2O = a ribonucleoside + phosphate. It carries out the reaction [phosphate](n) + H2O = [phosphate](n-1) + phosphate + H(+). Nucleotidase with a broad substrate specificity as it can dephosphorylate various ribo- and deoxyribonucleoside 5'-monophosphates and ribonucleoside 3'-monophosphates with highest affinity to 3'-AMP. Also hydrolyzes polyphosphate (exopolyphosphatase activity) with the preference for short-chain-length substrates (P20-25). Might be involved in the regulation of dNTP and NTP pools, and in the turnover of 3'-mononucleotides produced by numerous intracellular RNases (T1, T2, and F) during the degradation of various RNAs. The sequence is that of 5'/3'-nucleotidase SurE from Salmonella arizonae (strain ATCC BAA-731 / CDC346-86 / RSK2980).